The primary structure comprises 123 residues: Small ribosomal subunit protein uS12 (123 aa).

Aspartate 89 carries the post-translational modification 3-methylthioaspartic acid. Residues 104–123 (TQGVKDRRQRRSKYGAKRPK) form a disordered region. The span at 110-123 (RRQRRSKYGAKRPK) shows a compositional bias: basic residues.

It belongs to the universal ribosomal protein uS12 family. In terms of assembly, part of the 30S ribosomal subunit. Contacts proteins S8 and S17. May interact with IF1 in the 30S initiation complex.

Its function is as follows. With S4 and S5 plays an important role in translational accuracy. Functionally, interacts with and stabilizes bases of the 16S rRNA that are involved in tRNA selection in the A site and with the mRNA backbone. Located at the interface of the 30S and 50S subunits, it traverses the body of the 30S subunit contacting proteins on the other side and probably holding the rRNA structure together. The combined cluster of proteins S8, S12 and S17 appears to hold together the shoulder and platform of the 30S subunit. The sequence is that of Small ribosomal subunit protein uS12 from Rhodospirillum rubrum (strain ATCC 11170 / ATH 1.1.1 / DSM 467 / LMG 4362 / NCIMB 8255 / S1).